Consider the following 315-residue polypeptide: Taste receptor type 2 member 129 (315 aa).

Residues 1-9 (MDGIIQIIS) are Extracellular-facing. A helical membrane pass occupies residues 10–30 (AFIVIIEIIIGWFGNGFIVLV). Topologically, residues 31 to 46 (NCMHWIKRRRISTVNQ) are cytoplasmic. A helical transmembrane segment spans residues 47-67 (ILTALAFSRIYLLLTVFTVIL). The Extracellular portion of the chain corresponds to 68-101 (ASVQYSNILVTRREVKVIIFHLITSNHFSMWLAA). Residues 102-122 (CLGLFYFLKIANFSNFIFVFL) form a helical membrane-spanning segment. At 123 to 128 (KKRVNK) the chain is on the cytoplasmic side. A helical membrane pass occupies residues 129–149 (VVSGTLLMSLVFLFLNTLLIN). Topologically, residues 150 to 185 (SYIDAQIDDYRGYLLYDFTSNITVSFYRVILVINNC) are extracellular. N-linked (GlcNAc...) asparagine glycosylation occurs at Asn170. Residues 186–206 (IFTSIPFALSQSTFLMLIFSL) form a helical membrane-spanning segment. Over 207 to 233 (WRHYKKMQQHAQRCRDTLTNAHIKVLQ) the chain is Cytoplasmic. The chain crosses the membrane as a helical span at residues 234–254 (TMIMYVLLSAIFFLFLSMQIW). Over 255 to 266 (RNKLMENILFIR) the chain is Extracellular. A helical membrane pass occupies residues 267–287 (FCETVAAVFPSGHSCVLIWGD). Residues 288–315 (TNLRQTFLSVLWWLKHRFTLWVPKLYCR) are Cytoplasmic-facing.

The protein belongs to the G-protein coupled receptor T2R family.

The protein resides in the membrane. In terms of biological role, putative taste receptor which may play a role in the perception of bitterness. The protein is Taste receptor type 2 member 129 of Rattus norvegicus (Rat).